Consider the following 360-residue polypeptide: Histidinol-phosphate aminotransferase (360 aa).

Lysine 222 is subject to N6-(pyridoxal phosphate)lysine.

The protein belongs to the class-II pyridoxal-phosphate-dependent aminotransferase family. Histidinol-phosphate aminotransferase subfamily. The cofactor is pyridoxal 5'-phosphate.

It carries out the reaction L-histidinol phosphate + 2-oxoglutarate = 3-(imidazol-4-yl)-2-oxopropyl phosphate + L-glutamate. The protein operates within amino-acid biosynthesis; L-histidine biosynthesis; L-histidine from 5-phospho-alpha-D-ribose 1-diphosphate: step 7/9. The protein is Histidinol-phosphate aminotransferase of Haloarcula marismortui (strain ATCC 43049 / DSM 3752 / JCM 8966 / VKM B-1809) (Halobacterium marismortui).